Here is a 118-residue protein sequence, read N- to C-terminus: Mating-type P-specific polypeptide Pc (118 aa).

Residues 29 to 97 (KTTIYKNGFM…VRKQIAKLER (69 aa)) constitute a DNA-binding region (HMG box).

It is found in the nucleus. Functionally, mating type proteins are sequence specific DNA-binding proteins that act as master switches in yeast differentiation by controlling gene expression in a cell type-specific fashion. Required for conjugation and efficient meiosis. The chain is Mating-type P-specific polypeptide Pc (matPc) from Schizosaccharomyces kambucha (Fission yeast).